Here is a 544-residue protein sequence, read N- to C-terminus: Protein angel homolog 2 (544 aa).

Belongs to the CCR4/nocturin family.

This Homo sapiens (Human) protein is Protein angel homolog 2 (ANGEL2).